A 317-amino-acid chain; its full sequence is Glycine--tRNA ligase alpha subunit (317 aa).

The protein belongs to the class-II aminoacyl-tRNA synthetase family. Tetramer of two alpha and two beta subunits.

Its subcellular location is the cytoplasm. The catalysed reaction is tRNA(Gly) + glycine + ATP = glycyl-tRNA(Gly) + AMP + diphosphate. In Leptothrix cholodnii (strain ATCC 51168 / LMG 8142 / SP-6) (Leptothrix discophora (strain SP-6)), this protein is Glycine--tRNA ligase alpha subunit.